A 417-amino-acid chain; its full sequence is Serine hydroxymethyltransferase (417 aa).

(6S)-5,6,7,8-tetrahydrofolate-binding positions include L121 and G125–L127. K229 is subject to N6-(pyridoxal phosphate)lysine. A (6S)-5,6,7,8-tetrahydrofolate-binding site is contributed by S355–F357.

This sequence belongs to the SHMT family. As to quaternary structure, homodimer. Requires pyridoxal 5'-phosphate as cofactor.

It is found in the cytoplasm. The catalysed reaction is (6R)-5,10-methylene-5,6,7,8-tetrahydrofolate + glycine + H2O = (6S)-5,6,7,8-tetrahydrofolate + L-serine. It participates in one-carbon metabolism; tetrahydrofolate interconversion. Its pathway is amino-acid biosynthesis; glycine biosynthesis; glycine from L-serine: step 1/1. Functionally, catalyzes the reversible interconversion of serine and glycine with tetrahydrofolate (THF) serving as the one-carbon carrier. This reaction serves as the major source of one-carbon groups required for the biosynthesis of purines, thymidylate, methionine, and other important biomolecules. Also exhibits THF-independent aldolase activity toward beta-hydroxyamino acids, producing glycine and aldehydes, via a retro-aldol mechanism. The sequence is that of Serine hydroxymethyltransferase from Shewanella sp. (strain ANA-3).